The primary structure comprises 319 residues: tRNA pseudouridine synthase B (319 aa).

The active-site Nucleophile is the Asp-49.

It belongs to the pseudouridine synthase TruB family. Type 1 subfamily.

The enzyme catalyses uridine(55) in tRNA = pseudouridine(55) in tRNA. In terms of biological role, responsible for synthesis of pseudouridine from uracil-55 in the psi GC loop of transfer RNAs. The chain is tRNA pseudouridine synthase B from Aeromonas salmonicida (strain A449).